Here is a 280-residue protein sequence, read N- to C-terminus: Diaminopimelate epimerase (280 aa).

2 residues coordinate substrate: Asn-13 and Asn-66. Cys-75 functions as the Proton donor in the catalytic mechanism. Residues Gly-76 to Asn-77, Asn-165, Asn-198, and Glu-216 to Arg-217 contribute to the substrate site. Cys-225 acts as the Proton acceptor in catalysis. Gly-226 to Thr-227 serves as a coordination point for substrate.

This sequence belongs to the diaminopimelate epimerase family. Homodimer.

It is found in the cytoplasm. The catalysed reaction is (2S,6S)-2,6-diaminopimelate = meso-2,6-diaminopimelate. Its pathway is amino-acid biosynthesis; L-lysine biosynthesis via DAP pathway; DL-2,6-diaminopimelate from LL-2,6-diaminopimelate: step 1/1. Functionally, catalyzes the stereoinversion of LL-2,6-diaminopimelate (L,L-DAP) to meso-diaminopimelate (meso-DAP), a precursor of L-lysine and an essential component of the bacterial peptidoglycan. The protein is Diaminopimelate epimerase of Cyanothece sp. (strain PCC 7425 / ATCC 29141).